We begin with the raw amino-acid sequence, 346 residues long: Ribonucleoside-diphosphate reductase subunit beta (346 aa).

Fe cation is bound by residues Glu-89, Glu-120, and His-123. Tyr-129 is an active-site residue. Positions 193, 227, and 230 each coordinate Fe cation.

The protein belongs to the ribonucleoside diphosphate reductase small chain family. As to quaternary structure, tetramer of two alpha and two beta subunits. Fe cation is required as a cofactor.

The enzyme catalyses a 2'-deoxyribonucleoside 5'-diphosphate + [thioredoxin]-disulfide + H2O = a ribonucleoside 5'-diphosphate + [thioredoxin]-dithiol. Provides the precursors necessary for DNA synthesis. Catalyzes the biosynthesis of deoxyribonucleotides from the corresponding ribonucleotides. This Chlamydia trachomatis serovar D (strain ATCC VR-885 / DSM 19411 / UW-3/Cx) protein is Ribonucleoside-diphosphate reductase subunit beta (nrdB).